The primary structure comprises 377 residues: Mitogen-activated protein kinase mpkC (377 aa).

The 280-residue stretch at 20 to 299 (YVNPQPIGMG…AQDALRHPYL (280 aa)) folds into the Protein kinase domain. ATP contacts are provided by residues 26–34 (IGMGSFGLV) and lysine 49. Catalysis depends on aspartate 141, which acts as the Proton acceptor. Position 171 is a phosphothreonine (threonine 171). A TXY motif is present at residues 171 to 173 (TGY). Position 173 is a phosphotyrosine (tyrosine 173).

The protein belongs to the protein kinase superfamily. Ser/Thr protein kinase family. MAP kinase subfamily. HOG1 sub-subfamily. Requires Mg(2+) as cofactor. Post-translationally, dually phosphorylated on Thr-171 and Tyr-173, which activates the enzyme.

The catalysed reaction is L-seryl-[protein] + ATP = O-phospho-L-seryl-[protein] + ADP + H(+). It catalyses the reaction L-threonyl-[protein] + ATP = O-phospho-L-threonyl-[protein] + ADP + H(+). Its activity is regulated as follows. Activated by tyrosine and threonine phosphorylation. Functionally, mitogen-activated protein kinase required for growth on media where sorbitol or mannitol is the sole carbon source. In Neosartorya fischeri (strain ATCC 1020 / DSM 3700 / CBS 544.65 / FGSC A1164 / JCM 1740 / NRRL 181 / WB 181) (Aspergillus fischerianus), this protein is Mitogen-activated protein kinase mpkC (mpkc).